The chain runs to 317 residues: Beta-ketoacyl-[acyl-carrier-protein] synthase III (317 aa).

Residues cysteine 112 and histidine 244 contribute to the active site. Residues 245–249 (QANLR) form an ACP-binding region. The active site involves asparagine 274.

This sequence belongs to the thiolase-like superfamily. FabH family. In terms of assembly, homodimer.

The protein localises to the cytoplasm. The enzyme catalyses malonyl-[ACP] + acetyl-CoA + H(+) = 3-oxobutanoyl-[ACP] + CO2 + CoA. It participates in lipid metabolism; fatty acid biosynthesis. Its function is as follows. Catalyzes the condensation reaction of fatty acid synthesis by the addition to an acyl acceptor of two carbons from malonyl-ACP. Catalyzes the first condensation reaction which initiates fatty acid synthesis and may therefore play a role in governing the total rate of fatty acid production. Possesses both acetoacetyl-ACP synthase and acetyl transacylase activities. Its substrate specificity determines the biosynthesis of branched-chain and/or straight-chain of fatty acids. This is Beta-ketoacyl-[acyl-carrier-protein] synthase III from Serratia proteamaculans (strain 568).